Consider the following 122-residue polypeptide: Large ribosomal subunit protein uL14 (122 aa).

It belongs to the universal ribosomal protein uL14 family. As to quaternary structure, part of the 50S ribosomal subunit. Forms a cluster with proteins L3 and L19. In the 70S ribosome, L14 and L19 interact and together make contacts with the 16S rRNA in bridges B5 and B8.

Functionally, binds to 23S rRNA. Forms part of two intersubunit bridges in the 70S ribosome. This chain is Large ribosomal subunit protein uL14, found in Bifidobacterium adolescentis (strain ATCC 15703 / DSM 20083 / NCTC 11814 / E194a).